We begin with the raw amino-acid sequence, 354 residues long: Sulfate/thiosulfate import ATP-binding protein CysA 2 (354 aa).

Positions 3 to 237 (IHIQQVNKHF…PSNPFVYEFL (235 aa)) constitute an ABC transporter domain. Residue 35 to 42 (GPSGSGKT) coordinates ATP.

It belongs to the ABC transporter superfamily. Sulfate/tungstate importer (TC 3.A.1.6) family. In terms of assembly, the complex is composed of two ATP-binding proteins (CysA), two transmembrane proteins (CysT and CysW) and a solute-binding protein (CysP).

It localises to the cell inner membrane. The catalysed reaction is sulfate(out) + ATP + H2O = sulfate(in) + ADP + phosphate + H(+). The enzyme catalyses thiosulfate(out) + ATP + H2O = thiosulfate(in) + ADP + phosphate + H(+). Functionally, part of the ABC transporter complex CysAWTP involved in sulfate/thiosulfate import. Responsible for energy coupling to the transport system. This chain is Sulfate/thiosulfate import ATP-binding protein CysA 2, found in Shewanella oneidensis (strain ATCC 700550 / JCM 31522 / CIP 106686 / LMG 19005 / NCIMB 14063 / MR-1).